The chain runs to 561 residues: MRLWKSMAWGILLWHSQSGALCPAWPPARAAEEIARLQQQLADWNDIYWKQGVSAVDDSVYDQLSARLVQWQRCVGQDVSSTPVSPPLNGTTMHPVAHTGVRKLADRQAVEQWMRGRSELWVQPKVDGVAVTLVYQNGKLTRAISRGNGLQGEDWTPKIRLIPSIPQTTQGALANAVLQGEIFLQREGHIQQRMGGMNARSKVAGMLMRQDNASALNSLGIFIWAWPDGPANMPERLSQLAKAGFSLTKKYSLVVKDASEVERARQSWLTSALPFVTDGVVIRMAKEPASQYWRPGQGDWLAAWKYPPVAQVAQVSAIQFSVGKSGKITVVASLVPVILDDKRVQRVNIGSVKRWEAWDIAPGDQILVSLAGQGIPRLDEVVWRSRERSKPVPPDSHFNSLTCFYASATCQEQFISRLVWLGSRSALGLDGMGEASWRALHQTHRFEHIFSWLTLTSAQIANTPGFAKGKSEQIWRQFNLARRQSFTRWIMAMDIPLTQAALQASGDRSWEQLLMRTEQHWRQLPATGERRAGRVIDWRNNPQIKTLSRWLAAQHIPGFGS.

Lys125 acts as the N6-AMP-lysine intermediate in catalysis.

This sequence belongs to the NAD-dependent DNA ligase family. LigB subfamily.

The enzyme catalyses NAD(+) + (deoxyribonucleotide)n-3'-hydroxyl + 5'-phospho-(deoxyribonucleotide)m = (deoxyribonucleotide)n+m + AMP + beta-nicotinamide D-nucleotide.. Functionally, catalyzes the formation of phosphodiester linkages between 5'-phosphoryl and 3'-hydroxyl groups in double-stranded DNA using NAD as a coenzyme and as the energy source for the reaction. The polypeptide is DNA ligase B (Salmonella agona (strain SL483)).